We begin with the raw amino-acid sequence, 410 residues long: Peptidase T (410 aa).

Zn(2+) is bound at residue His-79. The active site involves Asp-81. Residue Asp-142 coordinates Zn(2+). Catalysis depends on Glu-176, which acts as the Proton acceptor. Residues Glu-177, Asp-199, and His-381 each coordinate Zn(2+).

This sequence belongs to the peptidase M20B family. It depends on Zn(2+) as a cofactor.

It localises to the cytoplasm. The enzyme catalyses Release of the N-terminal residue from a tripeptide.. In terms of biological role, cleaves the N-terminal amino acid of tripeptides. This chain is Peptidase T, found in Bacillus mycoides (strain KBAB4) (Bacillus weihenstephanensis).